A 222-amino-acid chain; its full sequence is Glutathione S-transferase A4 (222 aa).

Met1 carries the N-acetylmethionine modification. The GST N-terminal domain maps to 3–83 (AKPKLYYFNG…YLAAKYNLYG (81 aa)). Glutathione-binding positions include Tyr9, 53 to 55 (GQV), and 66 to 68 (TQT). A GST C-terminal domain is found at 85–208 (DLKERVRIDM…QPGSQRKPPP (124 aa)).

The protein belongs to the GST superfamily. Alpha family. In terms of assembly, homodimer. Post-translationally, the N-terminus is blocked.

Its subcellular location is the cytoplasm. It carries out the reaction RX + glutathione = an S-substituted glutathione + a halide anion + H(+). Functionally, conjugation of reduced glutathione to a wide number of exogenous and endogenous hydrophobic electrophiles. The chain is Glutathione S-transferase A4 (Gsta4) from Mus musculus (Mouse).